We begin with the raw amino-acid sequence, 206 residues long: Pyridoxal 5'-phosphate synthase subunit PdxT (206 aa).

59-61 (GES) is an L-glutamine binding site. The active-site Nucleophile is the Cys-91. L-glutamine-binding positions include Arg-123 and 151 to 152 (IR). Residues His-187 and Glu-189 each act as charge relay system in the active site.

Belongs to the glutaminase PdxT/SNO family. In terms of assembly, in the presence of PdxS, forms a dodecamer of heterodimers. Only shows activity in the heterodimer.

The enzyme catalyses aldehydo-D-ribose 5-phosphate + D-glyceraldehyde 3-phosphate + L-glutamine = pyridoxal 5'-phosphate + L-glutamate + phosphate + 3 H2O + H(+). It catalyses the reaction L-glutamine + H2O = L-glutamate + NH4(+). It participates in cofactor biosynthesis; pyridoxal 5'-phosphate biosynthesis. Catalyzes the hydrolysis of glutamine to glutamate and ammonia as part of the biosynthesis of pyridoxal 5'-phosphate. The resulting ammonia molecule is channeled to the active site of PdxS. The polypeptide is Pyridoxal 5'-phosphate synthase subunit PdxT (Mycobacterium sp. (strain JLS)).